Here is a 232-residue protein sequence, read N- to C-terminus: Phosphatidylserine decarboxylase proenzyme (232 aa).

S190 acts as the Schiff-base intermediate with substrate; via pyruvic acid in catalysis. S190 is modified (pyruvic acid (Ser); by autocatalysis).

Belongs to the phosphatidylserine decarboxylase family. PSD-A subfamily. In terms of assembly, heterodimer of a large membrane-associated beta subunit and a small pyruvoyl-containing alpha subunit. It depends on pyruvate as a cofactor. Post-translationally, is synthesized initially as an inactive proenzyme. Formation of the active enzyme involves a self-maturation process in which the active site pyruvoyl group is generated from an internal serine residue via an autocatalytic post-translational modification. Two non-identical subunits are generated from the proenzyme in this reaction, and the pyruvate is formed at the N-terminus of the alpha chain, which is derived from the carboxyl end of the proenzyme. The post-translation cleavage follows an unusual pathway, termed non-hydrolytic serinolysis, in which the side chain hydroxyl group of the serine supplies its oxygen atom to form the C-terminus of the beta chain, while the remainder of the serine residue undergoes an oxidative deamination to produce ammonia and the pyruvoyl prosthetic group on the alpha chain.

The protein resides in the cell membrane. It carries out the reaction a 1,2-diacyl-sn-glycero-3-phospho-L-serine + H(+) = a 1,2-diacyl-sn-glycero-3-phosphoethanolamine + CO2. It participates in phospholipid metabolism; phosphatidylethanolamine biosynthesis; phosphatidylethanolamine from CDP-diacylglycerol: step 2/2. Catalyzes the formation of phosphatidylethanolamine (PtdEtn) from phosphatidylserine (PtdSer). The protein is Phosphatidylserine decarboxylase proenzyme of Bradyrhizobium diazoefficiens (strain JCM 10833 / BCRC 13528 / IAM 13628 / NBRC 14792 / USDA 110).